The primary structure comprises 514 residues: GTPase Obg (514 aa).

Residues 2-159 form the Obg domain; the sequence is ATFVDRVTVH…GDILLELKTV (158 aa). Positions 62-88 are disordered; that stretch reads RRPHRSSGNGGFGMGDHRSGHTGEDLE. The span at 76–85 shows a compositional bias: basic and acidic residues; it reads GDHRSGHTGE. Residues 160–336 enclose the OBG-type G domain; sequence ADIALVGYPS…LSFALAELVE (177 aa). Residues 166 to 173, 191 to 195, 212 to 215, 288 to 291, and 317 to 319 each bind GTP; these read GYPSAGKS, FTTLH, DVPG, NKID, and STV. Mg(2+)-binding residues include serine 173 and threonine 193. In terms of domain architecture, OCT spans 356–440; it reads PKTVDDSGFV…ENGVVFDWEP (85 aa).

It belongs to the TRAFAC class OBG-HflX-like GTPase superfamily. OBG GTPase family. In terms of assembly, monomer. The cofactor is Mg(2+).

The protein resides in the cytoplasm. Its function is as follows. An essential GTPase which binds GTP, GDP and possibly (p)ppGpp with moderate affinity, with high nucleotide exchange rates and a fairly low GTP hydrolysis rate. Plays a role in control of the cell cycle, stress response, ribosome biogenesis and in those bacteria that undergo differentiation, in morphogenesis control. The sequence is that of GTPase Obg from Leifsonia xyli subsp. xyli (strain CTCB07).